Reading from the N-terminus, the 166-residue chain is Large ribosomal subunit protein uL10 (166 aa).

This sequence belongs to the universal ribosomal protein uL10 family. Part of the ribosomal stalk of the 50S ribosomal subunit. The N-terminus interacts with L11 and the large rRNA to form the base of the stalk. The C-terminus forms an elongated spine to which L12 dimers bind in a sequential fashion forming a multimeric L10(L12)X complex.

Its function is as follows. Forms part of the ribosomal stalk, playing a central role in the interaction of the ribosome with GTP-bound translation factors. This Ureaplasma urealyticum serovar 10 (strain ATCC 33699 / Western) protein is Large ribosomal subunit protein uL10.